The following is a 145-amino-acid chain: Phospholipase A2 (145 aa).

Residues 1–15 (MRLLVLAALLTVGAG) form the signal peptide. A Pyrrolidone carboxylic acid modification is found at Gln-16. Residues 16–22 (QAGLNSR) constitute a propeptide, removed by trypsin. 7 disulfides stabilise this stretch: Cys-33-Cys-99, Cys-49-Cys-145, Cys-51-Cys-67, Cys-66-Cys-127, Cys-73-Cys-120, Cys-83-Cys-113, and Cys-106-Cys-118. The Ca(2+) site is built by Tyr-50, Gly-52, and Gly-54. His-70 is an active-site residue. Asp-71 contacts Ca(2+). The active site involves Asp-121.

This sequence belongs to the phospholipase A2 family. As to quaternary structure, monomer or homodimer. It depends on Ca(2+) as a cofactor. Activated by trypsin cleavage in the duodenum. Can also be activated by thrombin or autocatalytically.

Its subcellular location is the secreted. The enzyme catalyses a 1,2-diacyl-sn-glycero-3-phosphocholine + H2O = a 1-acyl-sn-glycero-3-phosphocholine + a fatty acid + H(+). The catalysed reaction is 1,2-ditetradecanoyl-sn-glycero-3-phosphocholine + H2O = 1-tetradecanoyl-sn-glycero-3-phosphocholine + tetradecanoate + H(+). It catalyses the reaction 1,2-dihexadecanoyl-sn-glycero-3-phosphocholine + H2O = 1-hexadecanoyl-sn-glycero-3-phosphocholine + hexadecanoate + H(+). It carries out the reaction 1-hexadecanoyl-2-(9Z-octadecenoyl)-sn-glycero-3-phosphocholine + H2O = 1-hexadecanoyl-sn-glycero-3-phosphocholine + (9Z)-octadecenoate + H(+). The enzyme catalyses 1-hexadecanoyl-2-(5Z,8Z,11Z,14Z-eicosatetraenoyl)-sn-glycero-3-phosphocholine + H2O = 1-hexadecanoyl-sn-glycero-3-phosphocholine + (5Z,8Z,11Z,14Z)-eicosatetraenoate + H(+). The catalysed reaction is 1-hexadecanoyl-2-(9Z-octadecenoyl)-sn-glycero-3-phospho-(1'-sn-glycerol) + H2O = 1-hexadecanoyl-sn-glycero-3-phospho-(1'-sn-glycerol) + (9Z)-octadecenoate + H(+). It catalyses the reaction N-hexadecanoyl-1,2-di-(9Z-octadecenoyl)-sn-glycero-3-phosphoethanolamine + H2O = N-hexadecanoyl-1-(9Z-octadecenoyl)-sn-glycero-3-phosphoethanolamine + (9Z)-octadecenoate + H(+). It carries out the reaction 1-hexadecanoyl-2-(9Z,12Z-octadecadienoyl)-sn-glycero-3-phosphoethanolamine + H2O = 1-hexadecanoyl-sn-glycero-3-phosphoethanolamine + (9Z,12Z)-octadecadienoate + H(+). The enzyme catalyses N,1-dihexadecanoyl-2-(9Z,12Z-octadecadienoyl)-sn-glycero-3-phosphoethanolamine + H2O = N,1-dihexadecanoyl-sn-glycero-3-phosphoethanolamine + (9Z,12Z)-octadecadienoate + H(+). In terms of biological role, secretory calcium-dependent phospholipase A2 that primarily targets dietary phospholipids in the intestinal tract. Hydrolyzes the ester bond of the fatty acyl group attached at sn-2 position of phospholipids (phospholipase A2 activity) with preference for phosphatidylethanolamines and phosphatidylglycerols over phosphatidylcholines. May play a role in the biosynthesis of N-acyl ethanolamines that regulate energy metabolism and inflammation in the intestinal tract. Hydrolyzes N-acyl phosphatidylethanolamines to N-acyl lysophosphatidylethanolamines, which are further cleaved by a lysophospholipase D to release N-acyl ethanolamines. May act in an autocrine and paracrine manner. Has anti-helminth activity in a process regulated by gut microbiota. Upon helminth infection of intestinal epithelia, directly affects phosphatidylethanolamine contents in the membrane of helminth larvae, likely controlling an array of phospholipid-mediated cellular processes such as membrane fusion and cell division while providing for better immune recognition, ultimately reducing larvae integrity and infectivity. This Bos taurus (Bovine) protein is Phospholipase A2 (PLA2G1B).